The following is a 287-amino-acid chain: Bifunctional protein FolD (287 aa).

NADP(+) is bound by residues 167–169 (GRS) and Thr192.

The protein belongs to the tetrahydrofolate dehydrogenase/cyclohydrolase family. Homodimer.

The catalysed reaction is (6R)-5,10-methylene-5,6,7,8-tetrahydrofolate + NADP(+) = (6R)-5,10-methenyltetrahydrofolate + NADPH. It carries out the reaction (6R)-5,10-methenyltetrahydrofolate + H2O = (6R)-10-formyltetrahydrofolate + H(+). The protein operates within one-carbon metabolism; tetrahydrofolate interconversion. In terms of biological role, catalyzes the oxidation of 5,10-methylenetetrahydrofolate to 5,10-methenyltetrahydrofolate and then the hydrolysis of 5,10-methenyltetrahydrofolate to 10-formyltetrahydrofolate. This chain is Bifunctional protein FolD, found in Sorangium cellulosum (strain So ce56) (Polyangium cellulosum (strain So ce56)).